The chain runs to 523 residues: ATP-dependent RNA helicase DBP3 (523 aa).

Residues 1-21 are compositionally biased toward basic and acidic residues; that stretch reads MTKEEIADKKRKVVDEEVIEK. A disordered region spans residues 1–71; the sequence is MTKEEIADKK…SEKKPEPTSA (71 aa). Positions 22–48 are enriched in basic residues; it reads KKSKKHKKDKKDKKEKKDKKHKKHKKE. The segment covering 49–67 has biased composition (basic and acidic residues); that stretch reads KKGEKEVEVPEKESEKKPE. Positions 114–140 match the Q motif motif; it reads LSFDYLSLDSSIQAEISKFPKPTPIQA. Positions 143–315 constitute a Helicase ATP-binding domain; the sequence is WPYLLSGKDV…STFMNNPIKV (173 aa). ATP is bound at residue 156–163; the sequence is AETGSGKT. A DEAD box motif is present at residues 262–265; sequence DEAD. The 150-residue stretch at 344–493 folds into the Helicase C-terminal domain; sequence KLLELLKKYH…PVPEDLIKFG (150 aa).

Belongs to the DEAD box helicase family. DDX5/DBP2 subfamily.

It is found in the nucleus. The protein resides in the nucleolus. The enzyme catalyses ATP + H2O = ADP + phosphate + H(+). Its function is as follows. ATP-dependent RNA helicase required for 60S ribosomal subunit synthesis. Involved in efficient pre-rRNA processing, predominantly at site A3, which is necessary for the normal formation of 25S and 5.8S rRNAs. The polypeptide is ATP-dependent RNA helicase DBP3 (DBP3) (Saccharomyces cerevisiae (strain ATCC 204508 / S288c) (Baker's yeast)).